We begin with the raw amino-acid sequence, 161 residues long: MEVKVGIGDYAVAKKTGIISTYGLGSCVGITLYDRLNRVGGLLHALLPESARYGGRGNPAKYVDTGLELLIKDMMKLGASPRRLEAKLFGGAHMFTNVSNENLMVGKKNVEVAKRELKKRGIRLVAEDTGGKGGRTIYLDVSTGKVRMRKVSNGKVIEAVF.

Belongs to the CheD family.

The enzyme catalyses L-glutaminyl-[protein] + H2O = L-glutamyl-[protein] + NH4(+). In terms of biological role, probably deamidates glutamine residues to glutamate on methyl-accepting chemotaxis receptors (MCPs), playing an important role in chemotaxis. The sequence is that of Probable chemoreceptor glutamine deamidase CheD from Thermococcus kodakarensis (strain ATCC BAA-918 / JCM 12380 / KOD1) (Pyrococcus kodakaraensis (strain KOD1)).